A 564-amino-acid chain; its full sequence is NAC domain-containing protein 16 (564 aa).

In terms of domain architecture, NAC spans 16–166 (SAPGFRFHPT…YYALYKLYKK (151 aa)). A DNA-binding region spans residues 115–172 (VGLKKTLVFYRGRAPNGERTDWVMHEYTMDEEELGRCKNAKEYYALYKLYKKSGAGPK). Residues 535–555 (FLLLSIMGALCAIFWVFKATV) traverse the membrane as a helical segment.

In terms of tissue distribution, expressed in roots, rosette leaves, shoot apex, stems and flowers.

Its subcellular location is the membrane. The protein resides in the nucleus. Functionally, transcriptional activator activated by proteolytic cleavage through regulated intramembrane proteolysis (RIP). Transcriptional activator that promotes leaf senescence by up-regulating senescence-associated genes in response to developmental and stress-induced senescence signals. Functions in salt and oxidative stress-responsive signaling pathways. Binds to the promoter of NAC029/NAP and NAC059/ORS1 genes. This is NAC domain-containing protein 16 from Arabidopsis thaliana (Mouse-ear cress).